The sequence spans 199 residues: GTP cyclohydrolase-2 (199 aa).

52–56 contributes to the GTP binding site; sequence RMHSE. Zn(2+)-binding residues include C57, C68, and C70. Residues Q73, 94 to 96, and T116 each bind GTP; that span reads EGR. D128 acts as the Proton acceptor in catalysis. R130 serves as the catalytic Nucleophile. T151 and K156 together coordinate GTP.

The protein belongs to the GTP cyclohydrolase II family. Requires Zn(2+) as cofactor.

It catalyses the reaction GTP + 4 H2O = 2,5-diamino-6-hydroxy-4-(5-phosphoribosylamino)-pyrimidine + formate + 2 phosphate + 3 H(+). It participates in cofactor biosynthesis; riboflavin biosynthesis; 5-amino-6-(D-ribitylamino)uracil from GTP: step 1/4. Functionally, catalyzes the conversion of GTP to 2,5-diamino-6-ribosylamino-4(3H)-pyrimidinone 5'-phosphate (DARP), formate and pyrophosphate. The sequence is that of GTP cyclohydrolase-2 from Aliivibrio fischeri (strain ATCC 700601 / ES114) (Vibrio fischeri).